A 365-amino-acid polypeptide reads, in one-letter code: PR domain zinc finger protein 12 (365 aa).

Residues 86-203 (VEVIIAQSSI…PDQELLVWYG (118 aa)) enclose the SET domain. 3 consecutive C2H2-type zinc fingers follow at residues 243-265 (MRCVICHRGFNSRSNLRSHMRIH), 271-293 (FVCRFCNRRFSQSSTLRNHVRLH), and 299-323 (YKCQVCQSAYSQLAGLRAHQKSARH). The interval 318–338 (QKSARHRPPSTALQAHSPALP) is disordered. Over residues 329-338 (ALQAHSPALP) the composition is skewed to low complexity.

Belongs to the class V-like SAM-binding methyltransferase superfamily. Interacts with EHMT2.

The protein localises to the nucleus. Transcriptional regulator necessary for the development of nociceptive neurons, playing a key role in determining the nociceptive lineage from neural crest cell progenitors. Initiates neurogenesis and activates downstream pro-neuronal transcription factors, such as NEUROD1, BRN3A, and ISL1, specifically within nociceptive neurons, while repressing non-nociceptor cell fates. Essential for the proper function of nociceptors in adults, influencing both their excitability and their gene expression, thereby impacting how these neurons respond to various pain stimuli. This chain is PR domain zinc finger protein 12 (Prdm12), found in Mus musculus (Mouse).